The following is a 338-amino-acid chain: Glycerol-3-phosphate dehydrogenase [NAD(P)+] (338 aa).

Residues S13, W14, and K108 each coordinate NADPH. Positions 108, 139, and 141 each coordinate sn-glycerol 3-phosphate. Residue A143 participates in NADPH binding. Residues K194, D247, S257, R258, and N259 each coordinate sn-glycerol 3-phosphate. K194 functions as the Proton acceptor in the catalytic mechanism. NADPH is bound at residue R258. The NADPH site is built by V282 and E284.

The protein belongs to the NAD-dependent glycerol-3-phosphate dehydrogenase family.

The protein localises to the cytoplasm. It carries out the reaction sn-glycerol 3-phosphate + NAD(+) = dihydroxyacetone phosphate + NADH + H(+). The enzyme catalyses sn-glycerol 3-phosphate + NADP(+) = dihydroxyacetone phosphate + NADPH + H(+). Its pathway is membrane lipid metabolism; glycerophospholipid metabolism. Catalyzes the reduction of the glycolytic intermediate dihydroxyacetone phosphate (DHAP) to sn-glycerol 3-phosphate (G3P), the key precursor for phospholipid synthesis. The protein is Glycerol-3-phosphate dehydrogenase [NAD(P)+] of Streptococcus gordonii (strain Challis / ATCC 35105 / BCRC 15272 / CH1 / DL1 / V288).